Here is a 300-residue protein sequence, read N- to C-terminus: ADP,ATP carrier protein 2 (300 aa).

3 Solcar repeats span residues 8 to 100, 113 to 203, and 214 to 299; these read VAFI…YKQV, RYFI…ARGM, and VSWA…IKKV. Helical transmembrane passes span 10 to 39, 77 to 101, 112 to 132, 181 to 201, and 213 to 233; these read FIKD…LLLQ, LANV…KQVF, TRYF…SLCF, VSVQ…DTAR, and YVSW…SYPF. Arginine 82 and lysine 94 together coordinate ADP. Arginine 237 provides a ligand contact to ADP. Positions 237–242 are important for transport activity; sequence RRRMMM. Positions 237–242 match the Nucleotide carrier signature motif motif; it reads RRRMMM. A helical membrane pass occupies residues 276 to 293; the sequence is AFSNVLRGTGGAFVLVLY.

This sequence belongs to the mitochondrial carrier (TC 2.A.29) family. As to quaternary structure, monomer.

Its subcellular location is the mitochondrion inner membrane. It carries out the reaction ADP(in) + ATP(out) = ADP(out) + ATP(in). The matrix-open state (m-state) is inhibited by the membrane-permeable bongkrekic acid (BKA). The cytoplasmic-open state (c-state) is inhibited by the membrane-impermeable toxic inhibitor carboxyatractyloside (CATR). ADP:ATP antiporter that mediates import of ADP into the mitochondrial matrix for ATP synthesis, and export of ATP out to fuel the cell. Cycles between the cytoplasmic-open state (c-state) and the matrix-open state (m-state): operates by the alternating access mechanism with a single substrate-binding site intermittently exposed to either the cytosolic (c-state) or matrix (m-state) side of the inner mitochondrial membrane. The protein is ADP,ATP carrier protein 2 of Anopheles gambiae (African malaria mosquito).